The chain runs to 356 residues: tRNA-specific 2-thiouridylase MnmA 1 (356 aa).

ATP-binding positions include 8–15 (GMSGGVDS) and Met-34. Cys-103 serves as the catalytic Nucleophile. Residues Cys-103 and Cys-199 are joined by a disulfide bond. Gly-127 contacts ATP. Residues 149–151 (KDQ) are interaction with tRNA. Catalysis depends on Cys-199, which acts as the Cysteine persulfide intermediate. The interval 305-306 (RY) is interaction with tRNA.

This sequence belongs to the MnmA/TRMU family.

The protein localises to the cytoplasm. The enzyme catalyses S-sulfanyl-L-cysteinyl-[protein] + uridine(34) in tRNA + AH2 + ATP = 2-thiouridine(34) in tRNA + L-cysteinyl-[protein] + A + AMP + diphosphate + H(+). Catalyzes the 2-thiolation of uridine at the wobble position (U34) of tRNA, leading to the formation of s(2)U34. This is tRNA-specific 2-thiouridylase MnmA 1 from Clostridium botulinum (strain Langeland / NCTC 10281 / Type F).